A 142-amino-acid polypeptide reads, in one-letter code: Hemoglobin subunit alpha-1 (142 aa).

Serine 1 is modified (N-acetylserine). The 142-residue stretch at 1–142 (SLSDKDKAAV…VALALAERYR (142 aa)) folds into the Globin domain. Histidine 59 serves as a coordination point for O2. Histidine 88 is a heme b binding site.

The protein belongs to the globin family. As to quaternary structure, hb1 is a heterotetramer of two alpha-1 chains and two beta chains. HbC is a heterotetramer of two alpha-1 chains and two beta-C chains. In terms of tissue distribution, red blood cells.

Involved in oxygen transport from gills to the various peripheral tissues. The polypeptide is Hemoglobin subunit alpha-1 (hba1) (Trematomus newnesi (Dusky notothen)).